Consider the following 231-residue polypeptide: Probable septum site-determining protein MinC (231 aa).

Residues 102 to 125 form a disordered region; it reads KEKAPRPAPAPQAPTQNTTPVTKT. The segment covering 114–123 has biased composition (low complexity); that stretch reads APTQNTTPVT.

Belongs to the MinC family. In terms of assembly, interacts with MinD and FtsZ.

Its function is as follows. Cell division inhibitor that blocks the formation of polar Z ring septums. Rapidly oscillates between the poles of the cell to destabilize FtsZ filaments that have formed before they mature into polar Z rings. Prevents FtsZ polymerization. This is Probable septum site-determining protein MinC from Escherichia coli O45:K1 (strain S88 / ExPEC).